Here is a 701-residue protein sequence, read N- to C-terminus: Polyribonucleotide nucleotidyltransferase (701 aa).

Asp485 and Asp491 together coordinate Mg(2+). A KH domain is found at 552–611; that stretch reads PRITTLKINPEKIRDVIGKGGATIRALTEETGTTIELEDDGTVKIASSNGEATKEAIRRI. An S1 motif domain is found at 621 to 689; that stretch reads GTVYNGKVVR…RQGRVRLSMK (69 aa).

This sequence belongs to the polyribonucleotide nucleotidyltransferase family. Component of the RNA degradosome, which is a multiprotein complex involved in RNA processing and mRNA degradation. The cofactor is Mg(2+).

The protein localises to the cytoplasm. The catalysed reaction is RNA(n+1) + phosphate = RNA(n) + a ribonucleoside 5'-diphosphate. Its function is as follows. Involved in mRNA degradation. Catalyzes the phosphorolysis of single-stranded polyribonucleotides processively in the 3'- to 5'-direction. This is Polyribonucleotide nucleotidyltransferase from Shewanella piezotolerans (strain WP3 / JCM 13877).